The sequence spans 383 residues: WAT1-related protein At3g18200 (383 aa).

Positions 1–16 (MCYQTSKKKRRSRKRR) are enriched in basic residues. The tract at residues 1–23 (MCYQTSKKKRRSRKRRAQEEKEK) is disordered. 10 consecutive transmembrane segments (helical) span residues 33-53 (VKLV…HIVS), 65-85 (VYPV…AYFF), 91-111 (PPLT…GITA), 126-146 (TFAS…ACAL), 158-178 (GVAK…ITLY), 204-224 (LTLG…WMVL), 237-257 (TLTS…ALFV), 272-292 (LFTI…LQTW), 300-320 (VFVA…AFLI), and 325-345 (LYSG…LVLW). EamA domains lie at 44–173 (FCFA…GGAT) and 216–344 (LSWA…YLVL).

This sequence belongs to the drug/metabolite transporter (DMT) superfamily. Plant drug/metabolite exporter (P-DME) (TC 2.A.7.4) family.

The protein resides in the membrane. This chain is WAT1-related protein At3g18200, found in Arabidopsis thaliana (Mouse-ear cress).